Consider the following 170-residue polypeptide: Transmembrane protein 217B (170 aa).

The N-terminal stretch at 1–21 (MNVRMFSLMVGIFSVLNTTQF) is a signal peptide. The Lumenal portion of the chain corresponds to 22-58 (FIFDLNQKTHICYEAKFSIYVDSKSELVTWTLFHRAN). The helical transmembrane segment at 59 to 79 (ISTGLSLTTIIIGCFLFYCIH) threads the bilayer. Over 80–85 (KNIYMG) the chain is Cytoplasmic. The chain crosses the membrane as a helical span at residues 86–106 (LLIYAMWIITYELINFSIVLL). Topologically, residues 107 to 120 (LNGIIKDHFKTLSY) are lumenal. The chain crosses the membrane as a helical span at residues 121–141 (LHWIFQISHMLLHFFCLPFIV). Over 142 to 170 (KHAYNLYKESQTVGRKRRHRLCSTIAVNS) the chain is Cytoplasmic.

The protein localises to the membrane. The polypeptide is Transmembrane protein 217B (Homo sapiens (Human)).